The chain runs to 137 residues: MGFGATLAVGLTIFVLSVVTIIICFTCSCCCLYKTCRRPRPVVTTTTSTTVVHAPYPQPPSVPPSYPGPSYQGYHTMPPQPGMPAAPYPMQYPPPYPAQPMGPPAYHETLAGGAAAPYPASQPPYNPAYMDAPKAAL.

A helical transmembrane segment spans residues 3–23 (FGATLAVGLTIFVLSVVTIII).

The protein belongs to the shisa family. Interacts with PDCD6; PDCD6 can stabilize SHISA5.

It localises to the endoplasmic reticulum membrane. The protein resides in the nucleus membrane. Functionally, can induce apoptosis in a caspase-dependent manner and plays a role in p53/TP53-dependent apoptosis. This chain is Protein shisa-5 (SHISA5), found in Pongo abelii (Sumatran orangutan).